Consider the following 408-residue polypeptide: Arginine biosynthesis bifunctional protein ArgJ 1 (408 aa).

The substrate site is built by T154, K180, T191, E277, N403, and S408. T191 serves as the catalytic Nucleophile.

The protein belongs to the ArgJ family. In terms of assembly, heterotetramer of two alpha and two beta chains.

It is found in the cytoplasm. The enzyme catalyses N(2)-acetyl-L-ornithine + L-glutamate = N-acetyl-L-glutamate + L-ornithine. The catalysed reaction is L-glutamate + acetyl-CoA = N-acetyl-L-glutamate + CoA + H(+). Its pathway is amino-acid biosynthesis; L-arginine biosynthesis; L-ornithine and N-acetyl-L-glutamate from L-glutamate and N(2)-acetyl-L-ornithine (cyclic): step 1/1. It functions in the pathway amino-acid biosynthesis; L-arginine biosynthesis; N(2)-acetyl-L-ornithine from L-glutamate: step 1/4. Functionally, catalyzes two activities which are involved in the cyclic version of arginine biosynthesis: the synthesis of N-acetylglutamate from glutamate and acetyl-CoA as the acetyl donor, and of ornithine by transacetylation between N(2)-acetylornithine and glutamate. The polypeptide is Arginine biosynthesis bifunctional protein ArgJ 1 (Clostridium acetobutylicum (strain ATCC 824 / DSM 792 / JCM 1419 / IAM 19013 / LMG 5710 / NBRC 13948 / NRRL B-527 / VKM B-1787 / 2291 / W)).